Reading from the N-terminus, the 276-residue chain is Putative ripening-related protein 5 (276 aa).

Positions 1–18 (MAMIFLLAALSTTHLASS) are cleaved as a signal peptide.

It belongs to the kiwellin family.

It localises to the secreted. The chain is Putative ripening-related protein 5 from Oryza sativa subsp. japonica (Rice).